The sequence spans 435 residues: GTPase Obg (435 aa).

One can recognise an Obg domain in the interval 1–158 (MFIDRAKIYV…RWLYLELKLL (158 aa)). The region spanning 159–328 (ADVGLVGLPN…LLELMEKYVR (170 aa)) is the OBG-type G domain. GTP is bound by residues 165–172 (GLPNAGKS), 190–194 (FTTKT), 211–214 (DIPG), 280–283 (NKID), and 309–311 (SAK). Positions 172 and 192 each coordinate Mg(2+). The OCT domain maps to 343 to 426 (IQETKEGRVE…IGDYIFKYNA (84 aa)).

It belongs to the TRAFAC class OBG-HflX-like GTPase superfamily. OBG GTPase family. In terms of assembly, monomer. Requires Mg(2+) as cofactor.

The protein localises to the cytoplasm. An essential GTPase which binds GTP, GDP and possibly (p)ppGpp with moderate affinity, with high nucleotide exchange rates and a fairly low GTP hydrolysis rate. Plays a role in control of the cell cycle, stress response, ribosome biogenesis and in those bacteria that undergo differentiation, in morphogenesis control. In Dictyoglomus thermophilum (strain ATCC 35947 / DSM 3960 / H-6-12), this protein is GTPase Obg.